Consider the following 336-residue polypeptide: Glyceraldehyde-3-phosphate dehydrogenase, chromosomal (336 aa).

Residues arginine 12–isoleucine 13, aspartate 37, arginine 81, and serine 123 contribute to the NAD(+) site. Residues serine 154–threonine 156 and threonine 185 contribute to the D-glyceraldehyde 3-phosphate site. The Nucleophile role is filled by cysteine 155. NAD(+) is bound at residue asparagine 186. Residues arginine 200, threonine 213–glycine 214, and arginine 236 contribute to the D-glyceraldehyde 3-phosphate site. Asparagine 317 lines the NAD(+) pocket.

The protein belongs to the glyceraldehyde-3-phosphate dehydrogenase family. As to quaternary structure, homotetramer.

The catalysed reaction is D-glyceraldehyde 3-phosphate + phosphate + NAD(+) = (2R)-3-phospho-glyceroyl phosphate + NADH + H(+). The protein operates within carbohydrate biosynthesis; Calvin cycle. Its function is as follows. Could be involved in carbon fixation as a component of the Calvin cycle. Catalyzes the oxidative phosphorylation of glyceraldehyde 3-phosphate (G3P) to 1,3-bisphosphoglycerate (BPG) using the cofactor NAD. The first reaction step involves the formation of a hemiacetal intermediate between G3P and a cysteine residue, and this hemiacetal intermediate is then oxidized to a thioester, with concomitant reduction of NAD to NADH. The reduced NADH is then exchanged with the second NAD, and the thioester is attacked by a nucleophilic inorganic phosphate to produce BPG. In Cupriavidus necator (strain ATCC 17699 / DSM 428 / KCTC 22496 / NCIMB 10442 / H16 / Stanier 337) (Ralstonia eutropha), this protein is Glyceraldehyde-3-phosphate dehydrogenase, chromosomal (cbbGC).